The following is a 338-amino-acid chain: SPbeta prophage-derived uncharacterized protein YonB (338 aa).

This is SPbeta prophage-derived uncharacterized protein YonB (yonB) from Bacillus subtilis (strain 168).